Reading from the N-terminus, the 191-residue chain is UPF0312 protein SO_3370 (191 aa).

An N-terminal signal peptide occupies residues 1 to 22; that stretch reads MKKQLFSALIGASLFAPMAVSA.

It belongs to the UPF0312 family. Type 1 subfamily.

The protein localises to the periplasm. In Shewanella oneidensis (strain ATCC 700550 / JCM 31522 / CIP 106686 / LMG 19005 / NCIMB 14063 / MR-1), this protein is UPF0312 protein SO_3370.